Consider the following 357-residue polypeptide: MSISAAGVATGLGANVELKSNVGSSSSSVAGVRLFTSRKAQLRRCAAPATSASLYSDANYDLNNYKFAPIKESIVAREMTRRYMTDMITHADTDVVVVGAGSAGLSCAYELSKNPNVKVAIVEQSVSPGGGAWLGGQLFSAMIVRKPAHRFLDEIEVPYEEMENYVVIKHAALFTSTIMSKLLARPNVKLFNAVAAEDLIIRGDRVSGVVTNWALVAQNHNTQSCMDPNVMEAKVVVSSCGHDGPFGATGVKRLRSIGMIESVPGMKCLDMNAAEDAIVKHTREVVPGMIVTGMEVAEIDGSPRMGPTFGAMMISGQKAAHLALKALGLPNELDGNYKPNVHPELVLASTDDETASA.

Residues 1–51 (MSISAAGVATGLGANVELKSNVGSSSSSVAGVRLFTSRKAQLRRCAAPATS) constitute a chloroplast transit peptide. Residues alanine 103, 123–124 (EQ), glycine 131, and alanine 196 contribute to the substrate site. The residue at position 225 (cysteine 225) is a 2,3-didehydroalanine (Cys). Substrate contacts are provided by residues aspartate 227, histidine 242, methionine 294, and 304-306 (RMG).

The protein belongs to the THI4 family. As to quaternary structure, homooctamer. The cofactor is Fe cation. Post-translationally, during the catalytic reaction, a sulfide is transferred from Cys-225 to a reaction intermediate, generating a dehydroalanine residue.

Its subcellular location is the plastid. It localises to the chloroplast. The enzyme catalyses [ADP-thiazole synthase]-L-cysteine + glycine + NAD(+) = [ADP-thiazole synthase]-dehydroalanine + ADP-5-ethyl-4-methylthiazole-2-carboxylate + nicotinamide + 3 H2O + 2 H(+). Involved in biosynthesis of the thiamine precursor thiazole. Catalyzes the conversion of NAD and glycine to adenosine diphosphate 5-(2-hydroxyethyl)-4-methylthiazole-2-carboxylic acid (ADT), an adenylated thiazole intermediate. The reaction includes an iron-dependent sulfide transfer from a conserved cysteine residue of the protein to a thiazole intermediate. The enzyme can only undergo a single turnover, which suggests it is a suicide enzyme. May have additional roles in adaptation to various stress conditions and in DNA damage tolerance. This is Thiamine thiazole synthase 1, chloroplastic from Physcomitrium patens (Spreading-leaved earth moss).